We begin with the raw amino-acid sequence, 613 residues long: V-type proton ATPase catalytic subunit A isoform 1 (613 aa).

240–247 (GAFGCGKT) provides a ligand contact to ATP.

The protein belongs to the ATPase alpha/beta chains family. In terms of assembly, V-ATPase is a heteromultimeric enzyme composed of a peripheral catalytic V1 complex (main components: subunits A, B, C, D, E, and F) attached to an integral membrane V0 proton pore complex (main component: the proteolipid protein).

The catalysed reaction is ATP + H2O + 4 H(+)(in) = ADP + phosphate + 5 H(+)(out). In terms of biological role, catalytic subunit of the peripheral V1 complex of vacuolar ATPase. V-ATPase vacuolar ATPase is responsible for acidifying a variety of intracellular compartments in eukaryotic cells. The protein is V-type proton ATPase catalytic subunit A isoform 1 of Acetabularia acetabulum (Mermaid's wine glass).